Reading from the N-terminus, the 901-residue chain is Alpha-actinin-3 (901 aa).

The residue at position 1 (Met1) is an N-acetylmethionine. The tract at residues 1–261 (MMMVLQPEGL…IMTYVSCFYH (261 aa)) is actin-binding. Calponin-homology (CH) domains follow at residues 45-149 (KQQR…LRFA) and 158-264 (TSAK…HAFA). Spectrin repeat units follow at residues 288–398 (KLME…WLLS), 408–513 (HLAE…ALER), 523–634 (QLQL…MLQE), and 644–747 (RLRR…EVEN). 2 consecutive EF-hand domains span residues 760–795 (EQLN…MGYD) and 796–831 (LGEV…ETAE). Ca(2+) is bound by residues Asp773, Asn777, Met779, Asp784, Asp809, and Asn811.

It belongs to the alpha-actinin family. Homodimer; antiparallel. Also forms heterodimers with ACTN2. Interacts with MYOZ1.

F-actin cross-linking protein which is thought to anchor actin to a variety of intracellular structures. This is a bundling protein. The sequence is that of Alpha-actinin-3 (ACTN3) from Bos taurus (Bovine).